The following is a 412-amino-acid chain: Alpha-1-antiproteinase (412 aa).

An N-terminal signal peptide occupies residues 1 to 24; it reads MPSSISWGLLLLAGLCCLAPGSLA. Position 33 is a phosphoserine (serine 33). N-linked (GlcNAc...) asparagine glycans are attached at residues asparagine 65, asparagine 102, asparagine 165, and asparagine 266. The tract at residues 368-387 is RCL; it reads GVTVLEAIPMSLPPDVRFDR. The residue at position 378 (serine 378) is a Phosphoserine.

Belongs to the serpin family. As to quaternary structure, interacts with CELA2A. Interacts with ERGIC3 and LMAN1/ERGIC53. Interacts with PRSS1/Trypsin. As to expression, plasma.

It is found in the secreted. Functionally, inhibitor of serine proteases. The polypeptide is Alpha-1-antiproteinase (Callosciurus caniceps (Gray-bellied squirrel)).